The primary structure comprises 293 residues: Ribosomal protein L11 methyltransferase (293 aa).

Positions 146, 167, 189, and 230 each coordinate S-adenosyl-L-methionine.

It belongs to the methyltransferase superfamily. PrmA family.

Its subcellular location is the cytoplasm. It carries out the reaction L-lysyl-[protein] + 3 S-adenosyl-L-methionine = N(6),N(6),N(6)-trimethyl-L-lysyl-[protein] + 3 S-adenosyl-L-homocysteine + 3 H(+). Functionally, methylates ribosomal protein L11. This is Ribosomal protein L11 methyltransferase from Colwellia psychrerythraea (strain 34H / ATCC BAA-681) (Vibrio psychroerythus).